Here is a 78-residue protein sequence, read N- to C-terminus: Large ribosomal subunit protein bL28 (78 aa).

A disordered region spans residues Met1–Asn26.

Belongs to the bacterial ribosomal protein bL28 family.

This is Large ribosomal subunit protein bL28 from Corynebacterium jeikeium (strain K411).